The sequence spans 3993 residues: Intermembrane lipid transfer protein VPS13B (3993 aa).

A Chorein N-terminal domain is found at 2 to 102 (LESYVTPILM…KDGIQDDHES (101 aa)). The interval 100-133 (HESCGSNSTNRSTAENTKSSIKPRRIQQAAPADP) is disordered. Positions 103-119 (CGSNSTNRSTAENTKSS) are enriched in polar residues. Phosphoserine is present on residues S413, S998, S1001, and S1032. 3 disordered regions span residues 1262-1303 (SPVW…PFSD), 1616-1637 (DQLK…ERNS), and 1735-1770 (TKAT…DSGI). Residues 1264–1291 (VWSSVGTAPPDTSTCSPSADIGTTTEGD) show a composition bias toward polar residues. The segment covering 1739 to 1750 (EISKQEQKKVDT) has biased composition (basic and acidic residues). Positions 1756–1770 (AETSSRYSGAQDSGI) are enriched in polar residues. Phosphoserine is present on S1789. The segment at 2048-2067 (HSSAHSKETSTPSDSILNMD) is disordered. One can recognise an SHR-BD domain in the interval 2604–2683 (HFVICNDTQE…TIQYKGRTAS (80 aa)). Residues 3880-3993 (AFPITEISCA…KNKALRKGFS (114 aa)) form a localizes the protein to the Golgi apparatus region.

Belongs to the VPS13 family. As to quaternary structure, interacts with STX6. Interacts with STX12 (via N-terminus). Interacts with RAB6A isoform 1 (GTP-bound) and isoform 2 (GTP-bound). Interacts with RAB6B (GTP-bound). As to expression, ubiquitously expressed in all examined tissues.

It is found in the recycling endosome membrane. It localises to the cytoplasmic vesicle. The protein localises to the secretory vesicle. The protein resides in the acrosome membrane. Its subcellular location is the golgi apparatus. It is found in the cis-Golgi network membrane. It localises to the endoplasmic reticulum-Golgi intermediate compartment membrane. The protein localises to the trans-Golgi network membrane. The protein resides in the early endosome membrane. Its subcellular location is the lysosome membrane. In terms of biological role, mediates the transfer of lipids between membranes at organelle contact sites. Binds phosphatidylinositol 3-phosphate. Functions as a tethering factor in the slow endocytic recycling pathway, to assist traffic between early and recycling endosomes. Involved in the transport of proacrosomal vesicles to the nuclear dense lamina (NDL) during spermatid development. Plays a role in the assembly of the Golgi apparatus, possibly by mediating trafficking to the Golgi membrane. Plays a role in the development of the nervous system, and may be required for neuron projection development. May also play a role during adipose tissue development. Required for maintenance of the ocular lens. Required for proper organization of the Golgi. This Mus musculus (Mouse) protein is Intermembrane lipid transfer protein VPS13B.